The chain runs to 45 residues: MEAALLLAKLPEAYQIFDPLVDVLPIIPLFFLALAFVWQAAVGFK.

Residues 1–8 (MEAALLLA) constitute a propeptide that is removed on maturation. Residues 24 to 44 (LPIIPLFFLALAFVWQAAVGF) form a helical membrane-spanning segment.

The protein belongs to the PsbK family. In terms of assembly, PSII is composed of 1 copy each of membrane proteins PsbA, PsbB, PsbC, PsbD, PsbE, PsbF, PsbH, PsbI, PsbJ, PsbK, PsbL, PsbM, PsbT, PsbX, PsbY, PsbZ, Psb30/Ycf12, peripheral proteins PsbO, CyanoQ (PsbQ), PsbU, PsbV and a large number of cofactors. It forms dimeric complexes.

It localises to the cellular thylakoid membrane. One of the components of the core complex of photosystem II (PSII). PSII is a light-driven water:plastoquinone oxidoreductase that uses light energy to abstract electrons from H(2)O, generating O(2) and a proton gradient subsequently used for ATP formation. It consists of a core antenna complex that captures photons, and an electron transfer chain that converts photonic excitation into a charge separation. This Rippkaea orientalis (strain PCC 8801 / RF-1) (Cyanothece sp. (strain PCC 8801)) protein is Photosystem II reaction center protein K.